Consider the following 89-residue polypeptide: Bombyxin B-2 (89 aa).

An N-terminal signal peptide occupies residues 1–19 (MKTSVMFMLVFVISLMCSS). 3 cysteine pairs are disulfide-bonded: Cys29–Cys75, Cys41–Cys88, and Cys74–Cys79. Residues 48–66 (SGAQYAPYFWTRQYLGSRG) constitute a propeptide, c peptide like.

The protein belongs to the insulin family. In terms of assembly, heterodimer of a B chain and an A chain linked by two disulfide bonds.

It localises to the secreted. In terms of biological role, brain peptide responsible for activation of prothoracic glands to produce ecdysone in insects. This Bombyx mori (Silk moth) protein is Bombyxin B-2 (BBXB2).